The chain runs to 281 residues: Pantothenate synthetase (281 aa).

30–37 (MGALHAGH) is a binding site for ATP. His-37 acts as the Proton donor in catalysis. Residue Gln-64 coordinates (R)-pantoate. Gln-64 is a binding site for beta-alanine. 150-153 (GKKD) lines the ATP pocket. Gln-156 contributes to the (R)-pantoate binding site. ATP contacts are provided by residues Val-179 and 187–190 (YSSR).

The protein belongs to the pantothenate synthetase family. In terms of assembly, homodimer.

Its subcellular location is the cytoplasm. The catalysed reaction is (R)-pantoate + beta-alanine + ATP = (R)-pantothenate + AMP + diphosphate + H(+). Its pathway is cofactor biosynthesis; (R)-pantothenate biosynthesis; (R)-pantothenate from (R)-pantoate and beta-alanine: step 1/1. In terms of biological role, catalyzes the condensation of pantoate with beta-alanine in an ATP-dependent reaction via a pantoyl-adenylate intermediate. In Akkermansia muciniphila (strain ATCC BAA-835 / DSM 22959 / JCM 33894 / BCRC 81048 / CCUG 64013 / CIP 107961 / Muc), this protein is Pantothenate synthetase.